The following is a 298-amino-acid chain: Ethanolamine ammonia-lyase small subunit (298 aa).

Residues Val210, Glu231, and Cys261 each coordinate adenosylcob(III)alamin.

The protein belongs to the EutC family. The basic unit is a heterodimer which dimerizes to form tetramers. The heterotetramers trimerize; 6 large subunits form a core ring with 6 small subunits projecting outwards. Adenosylcob(III)alamin serves as cofactor.

The protein resides in the bacterial microcompartment. It carries out the reaction ethanolamine = acetaldehyde + NH4(+). It participates in amine and polyamine degradation; ethanolamine degradation. Functionally, catalyzes the deamination of various vicinal amino-alcohols to oxo compounds. Allows this organism to utilize ethanolamine as the sole source of nitrogen and carbon in the presence of external vitamin B12. The sequence is that of Ethanolamine ammonia-lyase small subunit from Salmonella dublin (strain CT_02021853).